The sequence spans 347 residues: Protein phosphatase 1 regulatory subunit 3G (347 aa).

A disordered region spans residues 1 to 77 (MDPSGEQLHR…ELQEYRRSRA (77 aa)). Residues 13 to 22 (ASSSTSSGDP) are compositionally biased toward polar residues. Position 81 is a phosphoserine (Ser-81). The region spanning 200 to 339 (EERLRRQRVC…NNEGANYTLR (140 aa)) is the CBM21 domain. The segment at 258–286 (DPESVEPLPPLQSGDSGSKAEDSEEGPGT) is disordered.

Functionally, glycogen-targeting subunit for protein phosphatase 1 (PP1). Involved in the regulation of hepatic glycogenesis in a manner coupled to the fasting-feeding cycle and distinct from other glycogen-targeting subunits. This is Protein phosphatase 1 regulatory subunit 3G (Ppp1r3g) from Mus musculus (Mouse).